We begin with the raw amino-acid sequence, 519 residues long: Sensory neuron membrane protein 2 (519 aa).

Topologically, residues M1–K7 are cytoplasmic. A helical transmembrane segment spans residues L8–F28. At P29–Q469 the chain is on the extracellular side. N-linked (GlcNAc...) asparagine glycans are attached at residues N44, N67, N104, N166, N229, N272, and N314. 3 cysteine pairs are disulfide-bonded: C268/C338, C299/C362, and C340/C351. A helical membrane pass occupies residues L470 to V490. Residues A491–R519 lie on the Cytoplasmic side of the membrane.

It belongs to the CD36 family. Localizes to both male and female antennae but not the leg, wing, gut, head or thoracic ganglia. Detected throughout the sensory epithelium, associating with both sex-pheromone sensilla and plant-volatile sensilla. Differentially expressed among different sensilla and different neurons within a given sensillum.

It localises to the cell membrane. Functionally, plays an olfactory role that is not restricted to pheromone sensitivity. This chain is Sensory neuron membrane protein 2, found in Manduca sexta (Tobacco hawkmoth).